Consider the following 842-residue polypeptide: Outer membrane usher protein AggC (842 aa).

Positions M1–A21 are cleaved as a signal peptide. Cysteines 819 and 841 form a disulfide.

This sequence belongs to the fimbrial export usher family.

Its subcellular location is the cell outer membrane. Functionally, involved in the export and assembly of the AAF/I fimbriae subunits across the outer membrane. The sequence is that of Outer membrane usher protein AggC (aggC) from Escherichia coli.